Reading from the N-terminus, the 235-residue chain is uncharacterized protein (235 aa).

The protein to E.coli YbeU.

This is an uncharacterized protein from Escherichia coli (strain K12).